The following is a 538-amino-acid chain: ESX-3 secretion system ATPase EccB3 (538 aa).

Positions 1–16 (MTNQQHDHDFDHDRRS) are enriched in basic and acidic residues. The tract at residues 1 to 25 (MTNQQHDHDFDHDRRSFASRTPVNN) is disordered. Residues 75 to 95 (VLMGVLIVITGLIGSFVFSLI) form a helical membrane-spanning segment.

Belongs to the EccB family. In terms of assembly, part of the ESX-3 / type VII secretion system (T7SS), which is composed of cytosolic and membrane components. The ESX-3 membrane complex is composed of EccB3, EccC3, EccD3 and EccE3.

The protein localises to the cell inner membrane. An ATPase. Part of the ESX-3 specialized secretion system, which is important for iron and zinc uptake or homeostasis. This Mycobacterium tuberculosis (strain CDC 1551 / Oshkosh) protein is ESX-3 secretion system ATPase EccB3.